The primary structure comprises 443 residues: Glucose-6-phosphate isomerase (443 aa).

Catalysis depends on E285, which acts as the Proton donor. Residues H306 and K420 contribute to the active site.

This sequence belongs to the GPI family.

It localises to the cytoplasm. It catalyses the reaction alpha-D-glucose 6-phosphate = beta-D-fructose 6-phosphate. The protein operates within carbohydrate biosynthesis; gluconeogenesis. Its pathway is carbohydrate degradation; glycolysis; D-glyceraldehyde 3-phosphate and glycerone phosphate from D-glucose: step 2/4. In terms of biological role, catalyzes the reversible isomerization of glucose-6-phosphate to fructose-6-phosphate. The chain is Glucose-6-phosphate isomerase from Staphylococcus saprophyticus subsp. saprophyticus (strain ATCC 15305 / DSM 20229 / NCIMB 8711 / NCTC 7292 / S-41).